The following is a 303-amino-acid chain: Nucleotide-binding protein SAB0719 (303 aa).

18-25 (GLSGAGKS) contacts ATP. 69 to 72 (DLRG) contacts GTP.

This sequence belongs to the RapZ-like family.

Displays ATPase and GTPase activities. The chain is Nucleotide-binding protein SAB0719 from Staphylococcus aureus (strain bovine RF122 / ET3-1).